The following is a 276-amino-acid chain: Malonyl-[acyl-carrier protein] O-methyltransferase (276 aa).

The protein belongs to the methyltransferase superfamily.

The catalysed reaction is malonyl-[ACP] + S-adenosyl-L-methionine = malonyl-[ACP] methyl ester + S-adenosyl-L-homocysteine. The protein operates within cofactor biosynthesis; biotin biosynthesis. Converts the free carboxyl group of a malonyl-thioester to its methyl ester by transfer of a methyl group from S-adenosyl-L-methionine (SAM). It allows to synthesize pimeloyl-ACP via the fatty acid synthetic pathway. This chain is Malonyl-[acyl-carrier protein] O-methyltransferase, found in Paenibacillus sp. (strain JDR-2).